A 593-amino-acid polypeptide reads, in one-letter code: ATP-dependent lipid A-core flippase (593 aa).

A run of 6 helical transmembrane segments spans residues Tyr-33 to Gly-55, Ile-67 to Phe-87, Ala-146 to Val-166, Trp-169 to Ile-189, Val-258 to Gly-278, and Gly-284 to Leu-304. The region spanning Ala-38–Lys-319 is the ABC transmembrane type-1 domain. An ABC transporter domain is found at Val-351–Arg-585. Position 383–390 (Gly-383–Thr-390) interacts with ATP.

Belongs to the ABC transporter superfamily. Lipid exporter (TC 3.A.1.106) family. In terms of assembly, homodimer.

The protein localises to the cell membrane. The catalysed reaction is ATP + H2O + lipid A-core oligosaccharideSide 1 = ADP + phosphate + lipid A-core oligosaccharideSide 2.. Functionally, involved in lipopolysaccharide (LPS) biosynthesis. Translocates lipid A-core from the inner to the outer leaflet of the inner membrane. Transmembrane domains (TMD) form a pore in the inner membrane and the ATP-binding domain (NBD) is responsible for energy generation. The sequence is that of ATP-dependent lipid A-core flippase from Francisella novicida.